Consider the following 425-residue polypeptide: Monoacylglycerol lipase ABHD2 (425 aa).

Over 1 to 9 (MNAMLETPE) the chain is Cytoplasmic. The helical; Signal-anchor for type II membrane protein transmembrane segment at 10-30 (LPAVFDGVKLAAVAAVLYVIV) threads the bilayer. Over 31–425 (RCLNLKSPTA…DTEQVEADLE (395 aa)) the chain is Extracellular. The AB hydrolase-1 domain occupies 128–382 (MVICPGIANH…HGGHLGFFEG (255 aa)). N-linked (GlcNAc...) asparagine glycosylation occurs at asparagine 136. Catalysis depends on serine 207, which acts as the Nucleophile. Residues aspartate 345 and histidine 376 each act as charge relay system in the active site. Asparagine 410 carries N-linked (GlcNAc...) asparagine glycosylation.

Belongs to the AB hydrolase superfamily. AB hydrolase 4 family.

Its subcellular location is the cell membrane. It carries out the reaction Hydrolyzes glycerol monoesters of long-chain fatty acids.. The enzyme catalyses an acetyl ester + H2O = an aliphatic alcohol + acetate + H(+). It catalyses the reaction a triacylglycerol + H2O = a diacylglycerol + a fatty acid + H(+). The catalysed reaction is 2-(5Z,8Z,11Z,14Z-eicosatetraenoyl)-glycerol + H2O = glycerol + (5Z,8Z,11Z,14Z)-eicosatetraenoate + H(+). It carries out the reaction a butanoate ester + H2O = an aliphatic alcohol + butanoate + H(+). The enzyme catalyses hexadecanoate ester + H2O = an aliphatic alcohol + hexadecanoate + H(+). Its activity is regulated as follows. Acylglycerol lipase activity is activated upon binding to progesterone. In terms of biological role, progesterone-dependent acylglycerol lipase that catalyzes hydrolysis of endocannabinoid arachidonoylglycerol (AG) from cell membrane. Acts as a progesterone receptor: progesterone-binding activates the acylglycerol lipase activity, mediating degradation of 1-arachidonoylglycerol (1AG) and 2-arachidonoylglycerol (2AG) to glycerol and arachidonic acid (AA). Also displays an ester hydrolase activity against acetyl ester, butanoate ester and hexadecanoate ester. Plays a key role in sperm capacitation in response to progesterone by mediating degradation of 2AG, an inhibitor of the sperm calcium channel CatSper, leading to calcium influx via CatSper and sperm activation. May also play a role in smooth muscle cells migration. This is Monoacylglycerol lipase ABHD2 (ABHD2) from Macaca fascicularis (Crab-eating macaque).